Here is a 115-residue protein sequence, read N- to C-terminus: NADH-ubiquinone oxidoreductase chain 3 (115 aa).

The next 3 helical transmembrane spans lie at 3–23 (FVLALTINTLLALLLMILTFW), 55–75 (FFLVAITFLLFDLEIALLLPL), and 84–104 (LPLMTTSSLMLIIILALGLTY).

The protein belongs to the complex I subunit 3 family. Core subunit of respiratory chain NADH dehydrogenase (Complex I) which is composed of 45 different subunits. Interacts with TMEM186. Interacts with TMEM242.

The protein localises to the mitochondrion inner membrane. It carries out the reaction a ubiquinone + NADH + 5 H(+)(in) = a ubiquinol + NAD(+) + 4 H(+)(out). In terms of biological role, core subunit of the mitochondrial membrane respiratory chain NADH dehydrogenase (Complex I) which catalyzes electron transfer from NADH through the respiratory chain, using ubiquinone as an electron acceptor. Essential for the catalytic activity of complex I. The protein is NADH-ubiquinone oxidoreductase chain 3 of Pongo pygmaeus (Bornean orangutan).